A 342-amino-acid chain; its full sequence is MATH domain and coiled-coil domain-containing protein At3g44800 (342 aa).

The MATH domain maps to 3–129; that stretch reads YEKFTWVIKN…NNEVKIVAEV (127 aa). The stretch at 253–327 forms a coiled coil; the sequence is KVDWLERKLE…ALLEKEKGKV (75 aa).

The protein is MATH domain and coiled-coil domain-containing protein At3g44800 of Arabidopsis thaliana (Mouse-ear cress).